Here is a 589-residue protein sequence, read N- to C-terminus: Probable translation initiation factor IF-2 (589 aa).

Residues 4–225 (VRSPFVVVMG…AGVSQRFIPR (222 aa)) enclose the tr-type G domain. The segment at 13–20 (GHVDVGKT) is G1. Residue 13-20 (GHVDVGKT) participates in GTP binding. Positions 38-42 (MITQH) are G2. The segment at 79–82 (DTPG) is G3. GTP contacts are provided by residues 79–83 (DTPGH) and 133–136 (NKLD). The tract at residues 133 to 136 (NKLD) is G4. Residues 201 to 203 (SAV) are G5.

The protein belongs to the TRAFAC class translation factor GTPase superfamily. Classic translation factor GTPase family. IF-2 subfamily.

Functionally, function in general translation initiation by promoting the binding of the formylmethionine-tRNA to ribosomes. Seems to function along with eIF-2. The chain is Probable translation initiation factor IF-2 from Pyrobaculum aerophilum (strain ATCC 51768 / DSM 7523 / JCM 9630 / CIP 104966 / NBRC 100827 / IM2).